The primary structure comprises 1036 residues: Cellulose synthase-like protein D1 (1036 aa).

The tract at residues 1 to 99 is disordered; the sequence is MASSPPKKTL…GGGDGPKMGN (99 aa). Polar residues-rich tracts occupy residues 9 to 19 and 69 to 80; these read TLNSQSSSLSR and NQPAGSSGSTSE. Residues 86-95 show a composition bias toward gly residues; sequence NRGGGGGDGP. 2 helical membrane-spanning segments follow: residues 178–198 and 208–228; these read ILSP…FFLW and AMWL…SWIL. Aspartate 308 is an active-site residue. Residues 626–665 are disordered; that stretch reads AMHVRTQSQASQTSQASDLESDTQPLNDDPDLGLPKKFGN. Residues 631-642 show a composition bias toward low complexity; the sequence is TQSQASQTSQAS. Aspartate 741 is an active-site residue. Helical transmembrane passes span 817–837, 848–868, 895–915, 938–958, 962–982, and 1002–1022; these read IYPF…LCLF, IHFL…SLLE, LAAV…SFTL, GLFI…VIGA, IYSV…SLWV, and TIVY…WITI.

The protein belongs to the glycosyltransferase 2 family. Plant cellulose synthase-like D subfamily.

Its subcellular location is the golgi apparatus membrane. Its function is as follows. Thought to be a Golgi-localized beta-glycan synthase that polymerize the backbones of noncellulosic polysaccharides (hemicelluloses) of plant cell wall. The protein is Cellulose synthase-like protein D1 (CSLD1) of Arabidopsis thaliana (Mouse-ear cress).